Reading from the N-terminus, the 185-residue chain is Ribosome-recycling factor (185 aa).

It belongs to the RRF family.

The protein localises to the cytoplasm. Its function is as follows. Responsible for the release of ribosomes from messenger RNA at the termination of protein biosynthesis. May increase the efficiency of translation by recycling ribosomes from one round of translation to another. This chain is Ribosome-recycling factor, found in Corynebacterium glutamicum (strain R).